A 465-amino-acid chain; its full sequence is MKHIVKHIHFVGIGGAGMSGIAEVLVNLGYQVSGSDLARNAVTERLEALGARVSIGHDAANIEGANAVVVSTAVRSDNPEVLAARRLRVPIVPRAVMLAELMRLKQGIAIAGTHGKTTTTSLVASVLAAGGLDPTFVIGGRLTSAGANARLGMGDFIVAEADESDASFLNLYPVIEVITNIDADHMDTYGHDFARLKQAFIEFTQRLPFYGSAVVCIDDANVRQIVPLISKPVVRYGFAADAQVRAENVEARDGRMHFTVRREGREPLPVVLNLPGLHNVQNALAAIAIATDLDVADAAIQQALAEFNGVGRRFQRYGEIAAAGGGAYTLIDDYGHHPVEMAATIAAARGAFPGRRLVLAFQPHRYTRTRDCFDDFVNVLSTVDALVLTEVYAAGEAPISTANGDALSRALRAAGKVEPVFVATVDEVPDALAKLARDGDVVITMGAGSIGGVPGKLAQDTQQKG.

112–118 serves as a coordination point for ATP; sequence GTHGKTT.

The protein belongs to the MurCDEF family.

The protein localises to the cytoplasm. The catalysed reaction is UDP-N-acetyl-alpha-D-muramate + L-alanine + ATP = UDP-N-acetyl-alpha-D-muramoyl-L-alanine + ADP + phosphate + H(+). It participates in cell wall biogenesis; peptidoglycan biosynthesis. In terms of biological role, cell wall formation. The polypeptide is UDP-N-acetylmuramate--L-alanine ligase (Burkholderia mallei (strain NCTC 10247)).